A 597-amino-acid chain; its full sequence is Formate--tetrahydrofolate ligase (597 aa).

84–91 (TPLGEGKS) provides a ligand contact to ATP.

Belongs to the formate--tetrahydrofolate ligase family.

It catalyses the reaction (6S)-5,6,7,8-tetrahydrofolate + formate + ATP = (6R)-10-formyltetrahydrofolate + ADP + phosphate. It functions in the pathway one-carbon metabolism; tetrahydrofolate interconversion. In Dehalococcoides mccartyi (strain CBDB1), this protein is Formate--tetrahydrofolate ligase.